Here is a 591-residue protein sequence, read N- to C-terminus: Pyruvate kinase 2 (591 aa).

Arg-38 provides a ligand contact to substrate. K(+) contacts are provided by Asn-40, Ser-42, and Asp-72. Residue 40–43 (NFSH) participates in ATP binding. Positions 79 and 164 each coordinate ATP. Residue Glu-229 participates in Mg(2+) binding. Substrate-binding residues include Gly-252, Asp-253, and Thr-285. Asp-253 contacts Mg(2+).

The protein belongs to the pyruvate kinase family. It in the C-terminal section; belongs to the PEP-utilizing enzyme family. As to quaternary structure, homotetramer. Mg(2+) is required as a cofactor. The cofactor is K(+).

It catalyses the reaction pyruvate + ATP = phosphoenolpyruvate + ADP + H(+). It participates in carbohydrate degradation; glycolysis; pyruvate from D-glyceraldehyde 3-phosphate: step 5/5. This is Pyruvate kinase 2 (pyk2) from Synechocystis sp. (strain ATCC 27184 / PCC 6803 / Kazusa).